The chain runs to 153 residues: uncharacterized protein (153 aa).

Positions 17–78 (IYIHTPHPHP…HTTLSNLSLN (62 aa)) are disordered. The segment covering 22-38 (PHPHPHPHPHTPTHTHP) has biased composition (basic residues).

This is an uncharacterized protein from Saccharomyces cerevisiae (strain ATCC 204508 / S288c) (Baker's yeast).